The following is a 226-amino-acid chain: Small ribosomal subunit protein uS3 (226 aa).

The region spanning 39–107 is the KH type-2 domain; the sequence is IRAYIKKNVV…EVTLNIKEVK (69 aa).

It belongs to the universal ribosomal protein uS3 family. In terms of assembly, part of the 30S ribosomal subunit. Forms a tight complex with proteins S10 and S14.

In terms of biological role, binds the lower part of the 30S subunit head. Binds mRNA in the 70S ribosome, positioning it for translation. The polypeptide is Small ribosomal subunit protein uS3 (Pelagibacter ubique (strain HTCC1062)).